A 238-amino-acid polypeptide reads, in one-letter code: Heme oxygenase (238 aa).

His-17 provides a ligand contact to heme b.

This sequence belongs to the heme oxygenase family.

It is found in the plastid. The protein localises to the chloroplast. It catalyses the reaction heme b + 3 reduced [NADPH--hemoprotein reductase] + 3 O2 = biliverdin IXalpha + CO + Fe(2+) + 3 oxidized [NADPH--hemoprotein reductase] + 3 H2O + H(+). Functionally, catalyzes the opening of the heme ring with the release of iron. Key enzyme in the synthesis of the chromophoric part of the photosynthetic antennae. In Pyropia yezoensis (Susabi-nori), this protein is Heme oxygenase (pbsA).